A 450-amino-acid chain; its full sequence is Growth/differentiation factor 7 (450 aa).

The signal sequence occupies residues Met1–Pro19. The propeptide occupies Arg20–Arg321. A glycan (N-linked (GlcNAc...) asparagine) is linked at Asn83. The disordered stretch occupies residues Ala296 to Cys349. Residues Gly340–Cys349 are compositionally biased toward basic residues. Cystine bridges form between Cys349–Cys415, Cys378–Cys447, and Cys382–Cys449.

The protein belongs to the TGF-beta family. Homodimer; disulfide-linked.

The protein localises to the secreted. Its function is as follows. May play an active role in the motor area of the primate neocortex. This Homo sapiens (Human) protein is Growth/differentiation factor 7 (GDF7).